Consider the following 429-residue polypeptide: Carbamoyl phosphate synthase arginine-specific small chain (429 aa).

The N-terminal 20 residues, 1–20, are a transit peptide targeting the mitochondrion; the sequence is MIRVIQPPLIASKQLFRRYL. Residues 218 to 406 form the Glutamine amidotransferase type-1 domain; it reads HIAVLDCGAK…FENIEQYRAT (189 aa). C295 serves as the catalytic Nucleophile. Catalysis depends on residues H379 and E381.

Belongs to the CarA family. In terms of assembly, heterodimer composed of 2 chains; the small (or glutamine) chain promotes the hydrolysis of glutamine to ammonia, which is used by the large (or ammonia) chain to synthesize carbamoyl phosphate.

It is found in the mitochondrion matrix. It carries out the reaction hydrogencarbonate + L-glutamine + 2 ATP + H2O = carbamoyl phosphate + L-glutamate + 2 ADP + phosphate + 2 H(+). The catalysed reaction is L-glutamine + H2O = L-glutamate + NH4(+). It participates in amino-acid biosynthesis; L-arginine biosynthesis; carbamoyl phosphate from bicarbonate: step 1/1. Small subunit of the arginine-specific carbamoyl phosphate synthase (CPSase). CPSase catalyzes the formation of carbamoyl phosphate from the ammonia moiety of glutamine, carbonate, and phosphate donated by ATP, the first step of the arginine biosynthetic pathway. The small subunit (glutamine amidotransferase) binds and cleaves glutamine to supply the large subunit with the substrate ammonia. In Debaryomyces hansenii (strain ATCC 36239 / CBS 767 / BCRC 21394 / JCM 1990 / NBRC 0083 / IGC 2968) (Yeast), this protein is Carbamoyl phosphate synthase arginine-specific small chain (CPA1).